Here is a 432-residue protein sequence, read N- to C-terminus: Alkaline protease secretion protein AprE (432 aa).

The Cytoplasmic segment spans residues 1-14; that stretch reads MTRTVKRDENAYAR. Residues 15-36 traverse the membrane as a helical segment; the sequence is LGWLLVLFGFGGALLWAAFAPL. Residues 37–432 are Periplasmic-facing; it reads DQGVAVPATV…DRAHVALAEN (396 aa).

It belongs to the membrane fusion protein (MFP) (TC 8.A.1) family.

The protein localises to the cell inner membrane. Functionally, involved in the secretion of alkaline protease. This chain is Alkaline protease secretion protein AprE (aprE), found in Pseudomonas aeruginosa (strain ATCC 15692 / DSM 22644 / CIP 104116 / JCM 14847 / LMG 12228 / 1C / PRS 101 / PAO1).